A 137-amino-acid chain; its full sequence is Large ribosomal subunit protein uL16 (137 aa).

The span at 1–16 shows a compositional bias: basic residues; that stretch reads MLQPKRTKFRKMQKGR. Residues 1 to 22 are disordered; the sequence is MLQPKRTKFRKMQKGRIRGEAK.

It belongs to the universal ribosomal protein uL16 family. Part of the 50S ribosomal subunit.

Binds 23S rRNA and is also seen to make contacts with the A and possibly P site tRNAs. This Jannaschia sp. (strain CCS1) protein is Large ribosomal subunit protein uL16.